Here is a 142-residue protein sequence, read N- to C-terminus: Large ribosomal subunit protein uL13 (142 aa).

The protein belongs to the universal ribosomal protein uL13 family. As to quaternary structure, part of the 50S ribosomal subunit.

Its function is as follows. This protein is one of the early assembly proteins of the 50S ribosomal subunit, although it is not seen to bind rRNA by itself. It is important during the early stages of 50S assembly. This Aeromonas salmonicida (strain A449) protein is Large ribosomal subunit protein uL13.